A 128-amino-acid chain; its full sequence is NADPH-dependent 7-cyano-7-deazaguanine reductase (128 aa).

Catalysis depends on Cys-39, which acts as the Thioimide intermediate. Asp-46 functions as the Proton donor in the catalytic mechanism. Substrate is bound by residues 61–63 (IEL) and 80–81 (HE).

Belongs to the GTP cyclohydrolase I family. QueF type 1 subfamily.

The protein resides in the cytoplasm. It carries out the reaction 7-aminomethyl-7-carbaguanine + 2 NADP(+) = 7-cyano-7-deazaguanine + 2 NADPH + 3 H(+). The protein operates within tRNA modification; tRNA-queuosine biosynthesis. In terms of biological role, catalyzes the NADPH-dependent reduction of 7-cyano-7-deazaguanine (preQ0) to 7-aminomethyl-7-deazaguanine (preQ1). In Magnetococcus marinus (strain ATCC BAA-1437 / JCM 17883 / MC-1), this protein is NADPH-dependent 7-cyano-7-deazaguanine reductase.